Here is a 249-residue protein sequence, read N- to C-terminus: Diaminopimelate epimerase (249 aa).

Substrate contacts are provided by Asn11 and Asn60. The active-site Proton donor is the Cys69. Substrate is bound by residues 70–71, Asn164, and 182–183; these read GN and ER. Cys192 functions as the Proton acceptor in the catalytic mechanism. 193–194 serves as a coordination point for substrate; sequence GT.

This sequence belongs to the diaminopimelate epimerase family. As to quaternary structure, homodimer.

It is found in the cytoplasm. It catalyses the reaction (2S,6S)-2,6-diaminopimelate = meso-2,6-diaminopimelate. It functions in the pathway amino-acid biosynthesis; L-lysine biosynthesis via DAP pathway; DL-2,6-diaminopimelate from LL-2,6-diaminopimelate: step 1/1. Functionally, catalyzes the stereoinversion of LL-2,6-diaminopimelate (L,L-DAP) to meso-diaminopimelate (meso-DAP), a precursor of L-lysine and an essential component of the bacterial peptidoglycan. This Campylobacter jejuni subsp. jejuni serotype O:23/36 (strain 81-176) protein is Diaminopimelate epimerase.